Reading from the N-terminus, the 109-residue chain is UPF0060 membrane protein ABO_1373 (109 aa).

4 helical membrane passes run 1 to 21, 33 to 53, 63 to 83, and 87 to 107; these read MLAL…IVGC, PGWV…LLSL, AAYG…VEGV, and PWDF…MFAP.

This sequence belongs to the UPF0060 family.

It is found in the cell inner membrane. The protein is UPF0060 membrane protein ABO_1373 of Alcanivorax borkumensis (strain ATCC 700651 / DSM 11573 / NCIMB 13689 / SK2).